We begin with the raw amino-acid sequence, 66 residues long: Small archaeal modifier protein 2 (66 aa).

Lysine 58 is covalently cross-linked (Glycyl lysine isopeptide (Lys-Gly) (interchain with G-Cter in SAMP2)). Glycine 66 carries the 1-thioglycine; alternate modification. Position 66 is a glycyl adenylate; alternate (glycine 66). Glycine 66 is covalently cross-linked (Glycyl lysine isopeptide (Gly-Lys) (interchain with K-? in acceptor proteins); alternate).

As to quaternary structure, monomer. Monomeric and polymeric forms interact with NcsA. In terms of processing, the C-terminal glycine is likely acyl-adenylated (-COAMP) by UbaA, and also probably thiocarboxylated (-COSH) to function in sulfur transfer.

Functionally, functions as a protein modifier covalently attached to lysine residues of substrate proteins, as well as a sulfur carrier in tRNA thiolation. The protein modification process is termed sampylation and involves the formation of an isopeptide bond between the SAMP2 C-terminal glycine carboxylate and the epsilon-amino group of lysine residues on target proteins. Is able to form polymeric chains with itself at Lys-58, similar to ubiquitin and other ubiquitin-like proteins. May serve as a proteolytic signal in the cell to target proteins for degradation by proteasomes. The protein is Small archaeal modifier protein 2 (samp2) of Haloferax volcanii (strain ATCC 29605 / DSM 3757 / JCM 8879 / NBRC 14742 / NCIMB 2012 / VKM B-1768 / DS2) (Halobacterium volcanii).